The primary structure comprises 398 residues: Inositol polyphosphate 5-phosphatase (398 aa).

It belongs to the inositol 1,4,5-trisphosphate 5-phosphatase type II family. In terms of tissue distribution, expressed in tail, cilia, dendrites, axon and male head.

It localises to the cytoplasm. In terms of biological role, dephosphorylates a number of phosphatidylinositols. Controls the cellular levels and subcellular distribution of phosphatidylinositol 3,5-bisphosphate and phosphatidylinositol 3,4,5-trisphosphate. Has a role in sperm activation and motility. Influences the localization of the transient receptor potential polycystin (TRPP) complex proteins lov-1 and pkd-2. The sequence is that of Inositol polyphosphate 5-phosphatase from Caenorhabditis elegans.